The chain runs to 117 residues: DNA-directed RNA polymerase subunit omega (117 aa).

Positions 96-105 (KEEAEEEAKQ) are enriched in basic and acidic residues. The disordered stretch occupies residues 96-117 (KEEAEEEAKQKNSRAAKAAAAE). The segment covering 108–117 (SRAAKAAAAE) has biased composition (low complexity).

It belongs to the RNA polymerase subunit omega family. As to quaternary structure, the RNAP catalytic core consists of 2 alpha, 1 beta, 1 beta' and 1 omega subunit. When a sigma factor is associated with the core the holoenzyme is formed, which can initiate transcription.

The catalysed reaction is RNA(n) + a ribonucleoside 5'-triphosphate = RNA(n+1) + diphosphate. Promotes RNA polymerase assembly. Latches the N- and C-terminal regions of the beta' subunit thereby facilitating its interaction with the beta and alpha subunits. The chain is DNA-directed RNA polymerase subunit omega (rpoZ) from Lactococcus lactis subsp. lactis (strain IL1403) (Streptococcus lactis).